The following is a 601-amino-acid chain: Elongation factor 4 (601 aa).

The 183-residue stretch at 7-189 (DTIRNFSIVA…AIVAKLPPPK (183 aa)) folds into the tr-type G domain. GTP is bound by residues 19 to 24 (DHGKST) and 136 to 139 (NKID).

It belongs to the TRAFAC class translation factor GTPase superfamily. Classic translation factor GTPase family. LepA subfamily.

It localises to the cell inner membrane. The catalysed reaction is GTP + H2O = GDP + phosphate + H(+). In terms of biological role, required for accurate and efficient protein synthesis under certain stress conditions. May act as a fidelity factor of the translation reaction, by catalyzing a one-codon backward translocation of tRNAs on improperly translocated ribosomes. Back-translocation proceeds from a post-translocation (POST) complex to a pre-translocation (PRE) complex, thus giving elongation factor G a second chance to translocate the tRNAs correctly. Binds to ribosomes in a GTP-dependent manner. This Methylobacterium nodulans (strain LMG 21967 / CNCM I-2342 / ORS 2060) protein is Elongation factor 4.